We begin with the raw amino-acid sequence, 799 residues long: Serine/threonine-protein kinase AfsK (799 aa).

The Protein kinase domain occupies 16 to 271; sequence FEVLGRLGAG…QAQLAPHLFG (256 aa). Residues 22–30 and Lys44 contribute to the ATP site; that span reads LGAGGMGLV. Ser71 bears the Phosphoserine; by autocatalysis mark. Asp138 serves as the catalytic Proton acceptor. Thr168 is subject to Phosphothreonine; by autocatalysis. Disordered regions lie at residues 295–343 and 393–426; these read RRNG…PAPP and LAASWSRPRPGVNGADPAVPAPAPAPPEASPAGW. 2 stretches are compositionally biased toward pro residues: residues 325 to 343 and 411 to 421; these read HAPPLPPPPAHDPVVPAPP and VPAPAPAPPEA.

The protein belongs to the protein kinase superfamily. Ser/Thr protein kinase family. Interacts (via the N-terminal kinase domain) with KbpA; the interaction prevents autophosphorylation of AfsK. In terms of processing, autophosphorylated mainly on threonine residues. Some phosphorylation on serine residues. Autophosphorylation on Thr-168 is the major site enhancing kinase activity towards AfsR, and is regulated though interaction with KbpA.

It catalyses the reaction L-seryl-[protein] + ATP = O-phospho-L-seryl-[protein] + ADP + H(+). It carries out the reaction L-threonyl-[protein] + ATP = O-phospho-L-threonyl-[protein] + ADP + H(+). Functionally, involved in the regulation of secondary metabolism by phosphorylating, on both Ser and Thr, the AfsR global regulatory protein involved in the control of secondary metabolism. The protein is Serine/threonine-protein kinase AfsK (afsK) of Streptomyces coelicolor (strain ATCC BAA-471 / A3(2) / M145).